The following is a 459-amino-acid chain: 2-(3-amino-3-carboxypropyl)histidine synthase subunit 1 (459 aa).

The disordered stretch occupies residues 1–68 (MEDDRAQVDL…AGANTSIEDS (68 aa)). Low complexity predominate over residues 41–61 (SAAAGKSSSSSSNSTSQPAGA). Residues Cys165, Cys268, and Cys403 each contribute to the [4Fe-4S] cluster site.

The protein belongs to the DPH1/DPH2 family. DPH1 subfamily. Component of the 2-(3-amino-3-carboxypropyl)histidine synthase complex composed of dph-1, dph-2, dph-3 and a NADH-dependent reductase, predominantly cbr-1. The cofactor is [4Fe-4S] cluster.

The protein resides in the cytoplasm. The catalysed reaction is L-histidyl-[translation elongation factor 2] + S-adenosyl-L-methionine = 2-[(3S)-amino-3-carboxypropyl]-L-histidyl-[translation elongation factor 2] + S-methyl-5'-thioadenosine + H(+). It functions in the pathway protein modification; peptidyl-diphthamide biosynthesis. Functionally, catalyzes the first step of diphthamide biosynthesis, a post-translational modification of histidine which occurs in elongation factor 2. Dph-1 and dph-2 transfer a 3-amino-3-carboxypropyl (ACP) group from S-adenosyl-L-methionine (SAM) to a histidine residue, the reaction is assisted by a reduction system comprising dph-3 and a NADH-dependent reductase, predominantly cbr-1. The polypeptide is 2-(3-amino-3-carboxypropyl)histidine synthase subunit 1 (dph-1) (Neurospora crassa (strain ATCC 24698 / 74-OR23-1A / CBS 708.71 / DSM 1257 / FGSC 987)).